Here is an 843-residue protein sequence, read N- to C-terminus: MNTNKLEENSPEEDTGKFEWKPKVKDEFKDISIYFSKEEWAEMGEWEKIRYRNVKRNYKMLISIGLRAPRPAFMCYQRQAMKPQINDSEDSDEEWTPKQQVSPPWVPFRVKHSKQQKESSRMPFSGESNVKEGSGIENLLNTSGSEHVQKPVSSLEEGNTSGQHSGKKLKLRKKNVEVKMYRLRERKGLAYEEVSEPQDDDYLYCEKCQNFFIDSCPNHGPPLFVKDSMVDRGHPNHSVLSLPPGLRISPSGIPEAGLGVWNEASDLPVGLHFGPYEGQITEDEEAANSGYSWLITKGRNCYEYVDGQDESQANWMRYVNCARDDEEQNLVAFQYHRKIFYRTCRVIRPGCELLVWYGDEYGQELGIKWGSKMKKGFTAGRELRTEIHPCLLCSLAFSSQKFLTQHMEWNHRTEIFPGTSARINPKPGDPCSDQLQEQHVDSQNKNDKASNEVKRKSKPRQRISTTFPSTLKEQMRSEESKRTVEELRTGQTTNTEDTVKSFIASEISSIERQCGQYFSDKSNVNEHQKTHTGEKPYVCRECGRGFTQNSHLIQHQRTHTGEKPYVCRECGRGFTQKSDLIKHQRTHTGEKPYVCRECGRGFTQKSDLIKHQRTHTGEKPYVCRECGRGFTQKSVLIKHQRTHTGEKPYVCRECGRGFTQKSVLIKHQRTHTGEKPYVCRECGRGFTAKSVLIQHQRTHTGEKPYVCRECGRGFTAKSNLIQHQRTHTGEKPYVCRECGRGFTAKSVLIQHQRTHTGEKPYVCRECGRGFTAKSVLIQHQRTHTGEKPYVCRECGRGFTQKSNLIKHQRTHTGEKPYVCRECGWGFTQKSDLIQHQRTHTREK.

One can recognise a KRAB-related domain in the interval 23-86 (KVKDEFKDIS…QRQAMKPQIN (64 aa)). Disordered stretches follow at residues 85-104 (INDSEDSDEEWTPKQQVSPP) and 110-170 (VKHS…KKLK). 4 residues coordinate Zn(2+): cysteine 205, cysteine 208, cysteine 216, and histidine 219. The SET domain maps to 244-358 (PGLRISPSGI…PGCELLVWYG (115 aa)). S-adenosyl-L-methionine-binding positions include 256-258 (AGL), tyrosine 291, and 320-321 (NC). Substrate is bound at residue 288–294 (NSGYSWL). Residue tyrosine 357 coordinates substrate. An N6,N6,N6-trimethyllysine; alternate modification is found at lysine 368. Lysine 368 carries the post-translational modification N6-methyllysine; alternate. 2 positions are modified to N6-methyllysine: lysine 372 and lysine 374. The segment at 388 to 411 (HPCLLCSLAFSSQKFLTQHMEWNH) adopts a C2H2-type 1 zinc-finger fold. Zn(2+) contacts are provided by cysteine 390, cysteine 393, histidine 406, and histidine 411. The interval 418-493 (GTSARINPKP…VEELRTGQTT (76 aa)) is disordered. The segment covering 436–454 (QEQHVDSQNKNDKASNEVK) has biased composition (basic and acidic residues). The segment covering 462-472 (RISTTFPSTLK) has biased composition (polar residues). The segment covering 473–488 (EQMRSEESKRTVEELR) has biased composition (basic and acidic residues). Residues 513-531 (QCGQYFSDKSNVNEHQKTH) form a C2H2-type 2; degenerate zinc finger. 11 consecutive C2H2-type zinc fingers follow at residues 537–559 (YVCRECGRGFTQNSHLIQHQRTH), 565–587 (YVCRECGRGFTQKSDLIKHQRTH), 593–615 (YVCRECGRGFTQKSDLIKHQRTH), 621–643 (YVCRECGRGFTQKSVLIKHQRTH), 649–671 (YVCRECGRGFTQKSVLIKHQRTH), 677–699 (YVCRECGRGFTAKSVLIQHQRTH), 705–727 (YVCRECGRGFTAKSNLIQHQRTH), 733–755 (YVCRECGRGFTAKSVLIQHQRTH), 761–783 (YVCRECGRGFTAKSVLIQHQRTH), 789–811 (YVCRECGRGFTQKSNLIKHQRTH), and 817–839 (YVCRECGWGFTQKSDLIQHQRTH). Residues cysteine 707, cysteine 710, histidine 723, histidine 727, cysteine 735, cysteine 738, histidine 751, histidine 755, cysteine 763, cysteine 766, histidine 779, histidine 783, cysteine 791, cysteine 794, histidine 807, and histidine 811 each coordinate Zn(2+). Residues 715-805 (TAKSNLIQHQ…RGFTQKSNLI (91 aa)) are DNA-binding.

The protein belongs to the class V-like SAM-binding methyltransferase superfamily. Homodimer. Interacts with EHMT2 and CDYL; interaction only takes place when PRDM9 is bound to hotspot DNA. Interacts with CXXC1; this interaction does not link PRDM9-activated recombination hotspot sites with DSB machinery and is not required for the hotspot recognition pathway. Forms a complex with EWSR1, REC8, SYCP3 and SYCP1; complex formation is dependent of phosphorylated form of REC8 and requires PRDM9 bound to hotspot DNA; EWSR1 joins PRDM9 with the chromosomal axis through REC8. Mono-methylated; automethylated. Tri-methylated; automethylated. Mono-methylation is predominant; automethylation is lower and slower than H3 peptide methylation and is in a highest S-adenosyl-L-methionine concentration-dependent. There are two major sites for automethylation at Lys-368 and Lys-374. Lysines can be simultaneously methylated, such as Lys-368(me3)/Lys-372(me1), Lys-368(me1)/Lys-374(me1) and Lys-368(me1)/Lys-372(me1)/Lys-374(me1). Automethylation is an intramolecular (cis) process. As to expression, specifically expressed in germ cells entering meiotic prophase in female fetal gonads and in postnatal testis. Expressed in early meiotic prophase.

The protein localises to the nucleus. It localises to the chromosome. It catalyses the reaction L-lysyl-[protein] + S-adenosyl-L-methionine = N(6)-methyl-L-lysyl-[protein] + S-adenosyl-L-homocysteine + H(+). The catalysed reaction is N(6),N(6)-dimethyl-L-lysyl-[protein] + S-adenosyl-L-methionine = N(6),N(6),N(6)-trimethyl-L-lysyl-[protein] + S-adenosyl-L-homocysteine + H(+). It carries out the reaction L-lysyl(4)-[histone H3] + 3 S-adenosyl-L-methionine = N(6),N(6),N(6)-trimethyl-L-lysyl(4)-[histone H3] + 3 S-adenosyl-L-homocysteine + 3 H(+). The enzyme catalyses L-lysyl(36)-[histone H3] + 3 S-adenosyl-L-methionine = N(6),N(6),N(6)-trimethyl-L-lysyl(36)-[histone H3] + 3 S-adenosyl-L-homocysteine + 3 H(+). It catalyses the reaction L-lysyl(9)-[histone H3] + 3 S-adenosyl-L-methionine = N(6),N(6),N(6)-trimethyl-L-lysyl(9)-[histone H3] + 3 S-adenosyl-L-homocysteine + 3 H(+). The catalysed reaction is L-lysyl(20)-[histone H4] + S-adenosyl-L-methionine = N(6)-methyl-L-lysyl(20)-[histone H4] + S-adenosyl-L-homocysteine + H(+). It carries out the reaction N(6)-methyl-L-lysyl(20)-[histone H4] + S-adenosyl-L-methionine = N(6),N(6)-dimethyl-L-lysyl(20)-[histone H4] + S-adenosyl-L-homocysteine + H(+). Functionally, histone methyltransferase that sequentially mono-, di-, and tri-methylates both 'Lys-4' (H3K4) and 'Lys-36' (H3K36) of histone H3 to produce respectively trimethylated 'Lys-4' (H3K4me3) and trimethylated 'Lys-36' (H3K36me3) histone H3 and plays a key role in meiotic prophase by determining hotspot localization thereby promoting meiotic recombination. Can also methylate all four core histones with H3 being the best substrate and the most highly modified. Is also able, on one hand, to mono and di-methylate H4K20 and on other hand to trimethylate H3K9 with the di-methylated H3K9 as the best substrate. During meiotic prophase, binds specific DNA sequences through its zinc finger domains thereby determining hotspot localization where it promotes local H3K4me3 and H3K36me3 enrichment on the same nucleosomes through its histone methyltransferase activity. Thereby promotes double-stranded breaks (DSB) formation, at this subset of PRDM9-binding sites, that initiates meiotic recombination for the proper meiotic progression. During meiotic progression hotspot-bound PRDM9 interacts with several complexes; in early leptonema binds CDYL and EHMT2 followed by EWSR1 and CXXC1 by the end of leptonema. EWSR1 joins PRDM9 with the chromosomal axis through REC8. In this way, controls the DSB repair pathway, pairing of homologous chromosomes and sex body formation. Moreover plays a central role in the transcriptional activation of genes during early meiotic prophase thanks to H3K4me3 and H3K36me3 enrichment that represents a specific tag for epigenetic transcriptional activation. In addition performs automethylation. Acetylation and phosphorylation of histone H3 attenuate or prevent histone H3 methylation. The chain is Histone-lysine N-methyltransferase PRDM9 from Mus musculus (Mouse).